Reading from the N-terminus, the 274-residue chain is MVINQKNLSSPVAPYDKSGSQSSTKADIPSINYTVDHSFQKRETSGKELSEATPQVTQSLSNQLILTTLNDLYNWARLSSLWPLLYGTSCCFIEFASLLGSRFDFDRFGLVPRSSPRQADLIITAGTVTMKMAPSLVRLYEQMPEPKYVIAMGACTITGGMFSTDSYSTVRGVDKLIPVDVYLPGCPPKPEAIIDAVIKLRKKVAQEDFVERNNFRQIHRYYSISHEFKSSSTVHTGKYLQSSERKSPPKELSEATGIPIQFILKNTQKTEIQP.

2 stretches are compositionally biased toward polar residues: residues 1–10 and 18–27; these read MVINQKNLSS and SGSQSSTKAD. Residues 1-27 are disordered; the sequence is MVINQKNLSSPVAPYDKSGSQSSTKAD. Residues Cys-90, Cys-91, Cys-155, and Cys-186 each coordinate [4Fe-4S] cluster.

The protein belongs to the complex I 20 kDa subunit family. As to quaternary structure, NDH is composed of at least 16 different subunits, 5 of which are encoded in the nucleus. [4Fe-4S] cluster serves as cofactor.

It localises to the plastid. Its subcellular location is the chloroplast thylakoid membrane. The enzyme catalyses a plastoquinone + NADH + (n+1) H(+)(in) = a plastoquinol + NAD(+) + n H(+)(out). The catalysed reaction is a plastoquinone + NADPH + (n+1) H(+)(in) = a plastoquinol + NADP(+) + n H(+)(out). Its function is as follows. NDH shuttles electrons from NAD(P)H:plastoquinone, via FMN and iron-sulfur (Fe-S) centers, to quinones in the photosynthetic chain and possibly in a chloroplast respiratory chain. The immediate electron acceptor for the enzyme in this species is believed to be plastoquinone. Couples the redox reaction to proton translocation, and thus conserves the redox energy in a proton gradient. This is NAD(P)H-quinone oxidoreductase subunit K, chloroplastic from Chlorokybus atmophyticus (Soil alga).